The chain runs to 428 residues: Glutamyl-tRNA reductase (428 aa).

Residues 49–52, Ser-109, 114–116, and Gln-120 each bind substrate; these read TCNR and EGQ. The active-site Nucleophile is the Cys-50. An NADP(+)-binding site is contributed by 189–194; it reads GAGKMS.

Belongs to the glutamyl-tRNA reductase family. Homodimer.

The enzyme catalyses (S)-4-amino-5-oxopentanoate + tRNA(Glu) + NADP(+) = L-glutamyl-tRNA(Glu) + NADPH + H(+). It functions in the pathway porphyrin-containing compound metabolism; protoporphyrin-IX biosynthesis; 5-aminolevulinate from L-glutamyl-tRNA(Glu): step 1/2. Its pathway is porphyrin-containing compound metabolism; chlorophyll biosynthesis. Its function is as follows. Catalyzes the NADPH-dependent reduction of glutamyl-tRNA(Glu) to glutamate 1-semialdehyde (GSA). In Microcystis aeruginosa (strain NIES-843 / IAM M-2473), this protein is Glutamyl-tRNA reductase.